We begin with the raw amino-acid sequence, 63 residues long: Progonadoliberin-1 (63 aa).

Glutamine 1 is subject to Pyrrolidone carboxylic acid. Position 10 is a glycine amide (glycine 10).

It belongs to the GnRH family. In terms of processing, the precursor is cleaved by ACE, which removes the Gly-Lys-Arg peptide at the C-terminus, leading to mature hormone. The mature form of Gonadoliberin-1 is also cleaved and degraded by ACE.

It is found in the secreted. Stimulates the secretion of gonadotropins; it stimulates the secretion of both luteinizing and follicle-stimulating hormones. This is Progonadoliberin-1 (GNRH1) from Mesocricetus auratus (Golden hamster).